A 344-amino-acid chain; its full sequence is UDP-N-acetylenolpyruvoylglucosamine reductase (344 aa).

The FAD-binding PCMH-type domain maps to 15 to 185; sequence LPACANQIIE…ISVGLKLAKA (171 aa). Arg-161 is a catalytic residue. Ser-231 serves as the catalytic Proton donor. Glu-327 is an active-site residue.

This sequence belongs to the MurB family. FAD is required as a cofactor.

The protein resides in the cytoplasm. It carries out the reaction UDP-N-acetyl-alpha-D-muramate + NADP(+) = UDP-N-acetyl-3-O-(1-carboxyvinyl)-alpha-D-glucosamine + NADPH + H(+). It participates in cell wall biogenesis; peptidoglycan biosynthesis. Cell wall formation. This Haemophilus ducreyi (strain 35000HP / ATCC 700724) protein is UDP-N-acetylenolpyruvoylglucosamine reductase.